The primary structure comprises 192 residues: Peptidyl-tRNA hydrolase (192 aa).

TRNA is bound at residue His-17. His-22 functions as the Proton acceptor in the catalytic mechanism. TRNA-binding residues include Phe-68, Asn-70, and Asn-116.

The protein belongs to the PTH family. In terms of assembly, monomer.

Its subcellular location is the cytoplasm. The catalysed reaction is an N-acyl-L-alpha-aminoacyl-tRNA + H2O = an N-acyl-L-amino acid + a tRNA + H(+). Functionally, hydrolyzes ribosome-free peptidyl-tRNAs (with 1 or more amino acids incorporated), which drop off the ribosome during protein synthesis, or as a result of ribosome stalling. Catalyzes the release of premature peptidyl moieties from peptidyl-tRNA molecules trapped in stalled 50S ribosomal subunits, and thus maintains levels of free tRNAs and 50S ribosomes. This is Peptidyl-tRNA hydrolase from Stenotrophomonas maltophilia (strain K279a).